Consider the following 264-residue polypeptide: MKKLKLHGFNNLTKSLSFCIYDICYAKTTEERDGYIAYIDELYNANRLTEILSETCSIIGANILNIARQDYEPQGASVTILVSEEPVDPKLIDKTEHPGPLPETVVAHLDKSHICVHTYPESHPEGGLCTFRADIEVSTCGVISPLKALNYLIHQLESDIVTIDYRVRGFTRDINGMKHFIDHEINSIQNFMSEDMKALYDMVDVNVYQENIFHTKMLLKEFDLKHYMFHTKPEDLTDSERQEITAALWKEMREIYYGRNMPAV.

The Schiff-base intermediate with substrate; via pyruvic acid role is filled by Ser112. Ser112 carries the pyruvic acid (Ser); by autocatalysis modification. The Proton acceptor; for processing activity role is filled by His117. Cys140 functions as the Proton donor; for catalytic activity in the catalytic mechanism.

Belongs to the prokaryotic AdoMetDC family. Type 2 subfamily. Heterooctamer of four alpha and four beta chains arranged as a tetramer of alpha/beta heterodimers. Pyruvate is required as a cofactor. In terms of processing, is synthesized initially as an inactive proenzyme. Formation of the active enzyme involves a self-maturation process in which the active site pyruvoyl group is generated from an internal serine residue via an autocatalytic post-translational modification. Two non-identical subunits are generated from the proenzyme in this reaction, and the pyruvate is formed at the N-terminus of the alpha chain, which is derived from the carboxyl end of the proenzyme. The post-translation cleavage follows an unusual pathway, termed non-hydrolytic serinolysis, in which the side chain hydroxyl group of the serine supplies its oxygen atom to form the C-terminus of the beta chain, while the remainder of the serine residue undergoes an oxidative deamination to produce ammonia and the pyruvoyl group blocking the N-terminus of the alpha chain.

It catalyses the reaction S-adenosyl-L-methionine + H(+) = S-adenosyl 3-(methylsulfanyl)propylamine + CO2. It functions in the pathway amine and polyamine biosynthesis; S-adenosylmethioninamine biosynthesis; S-adenosylmethioninamine from S-adenosyl-L-methionine: step 1/1. Its function is as follows. Catalyzes the decarboxylation of S-adenosylmethionine to S-adenosylmethioninamine (dcAdoMet), the propylamine donor required for the synthesis of the polyamines spermine and spermidine from the diamine putrescine. This Escherichia coli O45:K1 (strain S88 / ExPEC) protein is S-adenosylmethionine decarboxylase proenzyme.